The chain runs to 403 residues: Argininosuccinate synthase (403 aa).

Residues 13–21 (AYSGGLDTS) and Ala40 each bind ATP. L-citrulline contacts are provided by Tyr91 and Ser96. Residue Gly121 participates in ATP binding. The L-aspartate site is built by Thr123, Asn127, and Asp128. Asn127 provides a ligand contact to L-citrulline. L-citrulline contacts are provided by Arg131, Ser180, Ser189, Glu265, and Tyr277.

It belongs to the argininosuccinate synthase family. Type 1 subfamily. In terms of assembly, homotetramer.

The protein localises to the cytoplasm. The enzyme catalyses L-citrulline + L-aspartate + ATP = 2-(N(omega)-L-arginino)succinate + AMP + diphosphate + H(+). It functions in the pathway amino-acid biosynthesis; L-arginine biosynthesis; L-arginine from L-ornithine and carbamoyl phosphate: step 2/3. The protein is Argininosuccinate synthase of Leptospira borgpetersenii serovar Hardjo-bovis (strain JB197).